Consider the following 109-residue polypeptide: Small ribosomal subunit protein bS6 (109 aa).

Belongs to the bacterial ribosomal protein bS6 family.

Binds together with bS18 to 16S ribosomal RNA. The chain is Small ribosomal subunit protein bS6 from Anaplasma marginale (strain St. Maries).